We begin with the raw amino-acid sequence, 179 residues long: uncharacterized protein (179 aa).

A helical transmembrane segment spans residues 5–25 (MLAGIGIGVAAALGVAAVASL).

The protein to Rickettsia 17 kDa surface antigen.

It localises to the membrane. This is an uncharacterized protein from Escherichia coli O6:H1 (strain CFT073 / ATCC 700928 / UPEC).